Here is a 448-residue protein sequence, read N- to C-terminus: Enolase (448 aa).

A (2R)-2-phosphoglycerate-binding site is contributed by Gln-164. Catalysis depends on Glu-206, which acts as the Proton donor. Asp-243, Glu-289, and Asp-316 together coordinate Mg(2+). Lys-341, Arg-370, Ser-371, and Lys-392 together coordinate (2R)-2-phosphoglycerate. Residue Lys-341 is the Proton acceptor of the active site.

The protein belongs to the enolase family. It depends on Mg(2+) as a cofactor.

The protein resides in the cytoplasm. Its subcellular location is the secreted. It localises to the cell surface. The enzyme catalyses (2R)-2-phosphoglycerate = phosphoenolpyruvate + H2O. It functions in the pathway carbohydrate degradation; glycolysis; pyruvate from D-glyceraldehyde 3-phosphate: step 4/5. Its function is as follows. Catalyzes the reversible conversion of 2-phosphoglycerate (2-PG) into phosphoenolpyruvate (PEP). It is essential for the degradation of carbohydrates via glycolysis. This chain is Enolase, found in Oenococcus oeni (strain ATCC BAA-331 / PSU-1).